Consider the following 177-residue polypeptide: Ribosome maturation factor RimM (177 aa).

Residues 92–166 (EDTFYHADLM…RIVVVPDTNP (75 aa)) form the PRC barrel domain.

It belongs to the RimM family. In terms of assembly, binds ribosomal protein uS19.

The protein localises to the cytoplasm. Its function is as follows. An accessory protein needed during the final step in the assembly of 30S ribosomal subunit, possibly for assembly of the head region. Essential for efficient processing of 16S rRNA. May be needed both before and after RbfA during the maturation of 16S rRNA. It has affinity for free ribosomal 30S subunits but not for 70S ribosomes. The polypeptide is Ribosome maturation factor RimM (Azorhizobium caulinodans (strain ATCC 43989 / DSM 5975 / JCM 20966 / LMG 6465 / NBRC 14845 / NCIMB 13405 / ORS 571)).